The chain runs to 422 residues: FAD-dependent monooxygenase ptmM (422 aa).

Residues 8–24 traverse the membrane as a helical segment; that stretch reads VIIVGGSIAGLTLAHCL. Residues glutamate 35, glycine 49, arginine 108, aspartate 308, and alanine 321 each coordinate FAD.

This sequence belongs to the paxM FAD-dependent monooxygenase family. The cofactor is FAD.

It localises to the membrane. Its pathway is secondary metabolite biosynthesis. Functionally, FAD-dependent monooxygenase; part of the gene cluster that mediates the biosynthesis of the indole diterpenes penitrems. The geranylgeranyl diphosphate (GGPP) synthase ptmG catalyzes the first step in penitrem biosynthesis via conversion of farnesyl pyrophosphate and isopentyl pyrophosphate into geranylgeranyl pyrophosphate (GGPP). Condensation of indole-3-glycerol phosphate with GGPP by the prenyl transferase ptmC then forms 3-geranylgeranylindole (3-GGI). Epoxidation by the FAD-dependent monooxygenase ptmM leads to a epoxidized-GGI that is substrate of the terpene cyclase ptmB for cyclization to yield paspaline. Paspaline is subsequently converted to 13-desoxypaxilline by the cytochrome P450 monooxygenase ptmP, the latter being then converted to paxilline by the cytochrome P450 monooxygenase ptmQ. Paxilline is converted to beta-paxitriol via C-10 ketoreduction by the short-chain dehydrogenase ptmH which can be monoprenylated at the C-20 by the indole diterpene prenyltransferase ptmD. A two-step elimination (acetylation and elimination) process performed by the O-acetyltransferase ptmV and ptmI leads to the production of the prenylated form of penijanthine. The FAD-linked oxidoreductase ptmO then converts the prenylated form of penijanthine into PC-M5 which is in turn transformed into PC-M4 by the aromatic dimethylallyltransferase ptmE. Five sequential oxidative transformations performed by the cytochrome P450 monooxygenases ptmK, ptmU, ptmL, ptmN and ptmJ yield the various penitrem compounds. PtmK, ptmU and ptmM are involved in the formation of the key bicyclic ring of penitrem C via the formation of the intermediates secopenitrem D and penitrem D. PtmL catalyzes the epoxidation of penitrem D and C to yield penitrem B and F, respectively. PtmJ catalyzes the last benzylic hydroxylation to convert penitrem B to prenitrem E and penitrem F to penitrem A. The polypeptide is FAD-dependent monooxygenase ptmM (Penicillium ochrochloron).